Consider the following 60-residue polypeptide: Large ribosomal subunit protein uL30 (60 aa).

This sequence belongs to the universal ribosomal protein uL30 family. As to quaternary structure, part of the 50S ribosomal subunit.

This is Large ribosomal subunit protein uL30 from Polaromonas sp. (strain JS666 / ATCC BAA-500).